We begin with the raw amino-acid sequence, 645 residues long: 1,4-alpha-glucan branching enzyme GlgB (645 aa).

The active-site Nucleophile is the D309. E352 functions as the Proton donor in the catalytic mechanism. The disordered stretch occupies residues 619–645; sequence VKTRKGSKKQDGSKTKVRSNVTSRGKR. Residues 636-645 show a composition bias toward polar residues; sequence RSNVTSRGKR.

Belongs to the glycosyl hydrolase 13 family. GlgB subfamily. As to quaternary structure, monomer.

It carries out the reaction Transfers a segment of a (1-&gt;4)-alpha-D-glucan chain to a primary hydroxy group in a similar glucan chain.. Its pathway is glycan biosynthesis; glycogen biosynthesis. Functionally, catalyzes the formation of the alpha-1,6-glucosidic linkages in glycogen by scission of a 1,4-alpha-linked oligosaccharide from growing alpha-1,4-glucan chains and the subsequent attachment of the oligosaccharide to the alpha-1,6 position. The polypeptide is 1,4-alpha-glucan branching enzyme GlgB (Bacillus cereus (strain AH820)).